The following is a 770-amino-acid chain: Signal transducer and activator of transcription 3 (770 aa).

An N-acetylalanine modification is found at alanine 2. An N6-acetyllysine mark is found at lysine 49 and lysine 87. The short motif at 150-162 (DVRKRVQDLEQKM) is the Essential for nuclear import element. The SH2 domain occupies 580–670 (WNEGYIMGFI…DATNILVSPL (91 aa)). 3 positions are modified to allysine; alternate: lysine 601, lysine 615, and lysine 631. Residues lysine 601, lysine 615, and lysine 631 each carry the N6-acetyllysine; alternate modification. A Phosphotyrosine; by TYK2 modification is found at tyrosine 640. At lysine 685 the chain carries Allysine; alternate. Lysine 685 carries the N6-acetyllysine; alternate modification. Tyrosine 705 is subject to Phosphotyrosine; by FER and PTK6. Lysine 707 carries the post-translational modification N6-acetyllysine. Residue threonine 714 is modified to Phosphothreonine. Residue serine 727 is modified to Phosphoserine; by DYRK2, NLK, NEK6, IRAK1, RPS6KA5, ZIPK/DAPK3 and PKC/PRKCE.

The protein belongs to the transcription factor STAT family. In terms of assembly, forms a homodimer or a heterodimer with a related family member (at least STAT1). Component of a promoter-binding complex composed of STAT3, NFATC3 and NFATC4; complex formation is enhanced by calcineurin. Interacts with IL31RA, NCOA1, PELP1, SIPAR, SOCS7, STATIP1 and TMF1. Interacts with IL23R in presence of IL23. Interacts (via SH2 domain) with NLK. Interacts with ARL2BP; the interaction is enhanced by LIF and JAK1 expression. Interacts with KPNA4 and KPNA5; KPNA4 may be the primary mediator of nuclear import. Interacts with CAV2; the interaction is increased on insulin-induced tyrosine phosphorylation of CAV2 and leads to STAT3 activation. Interacts with ARL2BP; interaction is enhanced with ARL2. Interacts with NEK6. Binds to CDK9 when activated and nuclear. Interacts with BMX. Interacts with ZIPK/DAPK3. Interacts with PIAS3; the interaction occurs on stimulation by IL6, CNTF or OSM and inhibits the DNA binding activity of STAT3. In prostate cancer cells, interacts with PRKCE and promotes DNA binding activity of STAT3. Interacts with STMN3, antagonizing its microtubule-destabilizing activity. Interacts with the 'Lys-129' acetylated form of BIRC5/survivin. Interacts with FER. Interacts (via SH2 domain) with EIF2AK2/PKR (via the kinase catalytic domain). Interacts with FGFR4. Interacts with INPP5F; the interaction is independent of STAT3 Tyr-705 phosphorylation status. Interacts with OCIAD1 and OCIAD2. Interacts (unphosphorylated or phosphorylated at Ser-727) with PHB1. Interacts and may form heterodimers with NHLH1. Found in a complex with SLC39A6, SLC39A10 and with the 'Ser-727' phosphorylated form of STAT3 throughout mitosis. Interacts (when acetylated) with EP300 (via bromo domain); interaction takes place following STAT3 acetylation by EP300 and promotes enhanceosome assembly. Interacts (when acetylated) with BRD2 (via bromo domain); interaction promotes STAT3 recruitment to chromatin and T-helper Th17 cell differentiation. Interacts with FAM220A/SIPAR; the interaction occurs in both the nucleus and the cytoplasm, is enhanced by IL6 and promotes STAT3 dephosphorylation. Interacts in both unphosphorylated and phosphorylated forms with FAM220A but interacts preferentially in the phosphorylated form in the nucleus. Interacts with PTPN2; the interaction is promoted by FAM220A and leads to STAT3 dephosphorylation which negatively regulates STAT3 transcriptional activator activity. Post-translationally, activated through tyrosine phosphorylation by BMX. Tyrosine phosphorylated in response to IL6, IL11, CNTF, LIF, KITLG/SCF, CSF1, EGF, PDGF, IFN-alpha and OSM. Activated KIT promotes phosphorylation on tyrosine residues and subsequent translocation to the nucleus. Tyrosine phosphorylated in response to constitutively activated FGFR1, FGFR2, FGFR3 and FGFR4. Phosphorylated on serine upon DNA damage, probably by ATM or ATR. Serine phosphorylation is important for the formation of stable DNA-binding STAT3 homodimers and maximal transcriptional activity. ARL2BP may participate in keeping the phosphorylated state of STAT3 within the nucleus. Tyrosine phosphorylated upon stimulation with EGF. Upon LPS challenge, phosphorylated within the nucleus by IRAK1. Phosphorylated on Ser-727 by RPS6KA5. Dephosphorylation on tyrosine residues by PTPN2 negatively regulates IL6/interleukin-6 signaling. Phosphorylation at Tyr-705 by FER, isoform M2 of PKM (PKM2) or PTK6 leads to an increase of its transcriptional activity. Phosphorylation at Tyr-705 is increased in the presence of calcineurin. Phosphorylation at Tyr-640 by TYK2 negatively regulates transcriptional activity. In terms of processing, acetylated on lysine residues by EP300/p300, promoting its activation. Acetylation at Lys-49 and Lys-87 by EP300/p300 promotes its activation. Acetylation at Lys-87 by EP300/p300 promotes its association with BRD2 and recruitment to chromatin. Deacetylated at Lys-49 and Lys-87 by HDAC1. Acetylation at Lys-685 by EP300/p300 promotes its homodimerization and activation. Deacetylated at Lys-685 by HDAC3. Acetylated on lysine residues by CREBBP. Deacetylation by LOXL3 leads to disrupt STAT3 dimerization and inhibit STAT3 transcription activity. Oxidation of lysine residues to allysine on STAT3 preferentially takes place on lysine residues that are acetylated. Some lysine residues are oxidized to allysine by LOXL3, leading to disrupt STAT3 dimerization and inhibit STAT3 transcription activity. Oxidation of lysine residues to allysine on STAT3 preferentially takes place on lysine residues that are acetylated. In terms of tissue distribution, detected in lung, heart, oviduct, ovary, uterus and kidney (at protein level). Expressed in cardiomyocytes (at protein level). Detected in ovary, oviduct, and at lower levels in uterus and lung.

The protein resides in the cytoplasm. It is found in the nucleus. Its function is as follows. Signal transducer and transcription activator that mediates cellular responses to interleukins, KITLG/SCF, LEP and other growth factors. Once activated, recruits coactivators, such as NCOA1 or MED1, to the promoter region of the target gene. May mediate cellular responses to activated FGFR1, FGFR2, FGFR3 and FGFR4. Upon activation of IL6ST/gp130 signaling by interleukin-6 (IL6), binds to the IL6-responsive elements identified in the promoters of various acute-phase protein genes. Activated by IL31 through IL31RA. Acts as a regulator of inflammatory response by regulating differentiation of naive CD4(+) T-cells into T-helper Th17 or regulatory T-cells (Treg): acetylation promotes its transcription activity and cell differentiation while deacetylation and oxidation of lysine residues by LOXL3 inhibits differentiation. Involved in cell cycle regulation by inducing the expression of key genes for the progression from G1 to S phase, such as CCND1. Mediates the effects of LEP on melanocortin production, body energy homeostasis and lactation. May play an apoptotic role by transctivating BIRC5 expression under LEP activation. Cytoplasmic STAT3 represses macroautophagy by inhibiting EIF2AK2/PKR activity. Plays a crucial role in basal beta cell functions, such as regulation of insulin secretion. Following JAK/STAT signaling activation and as part of a complex with NFATC3 and NFATC4, binds to the alpha-beta E4 promoter region of CRYAB and activates transcription in cardiomyocytes. Plays an important role in host defense in methicillin-resistant S.aureus lung infection by regulating the expression of the antimicrobial lectin REG3G. In Rattus norvegicus (Rat), this protein is Signal transducer and activator of transcription 3 (Stat3).